A 54-amino-acid polypeptide reads, in one-letter code: Large ribosomal subunit protein bL32c (54 aa).

It belongs to the bacterial ribosomal protein bL32 family.

The protein resides in the plastid. Its subcellular location is the chloroplast. This chain is Large ribosomal subunit protein bL32c, found in Panax ginseng (Korean ginseng).